We begin with the raw amino-acid sequence, 262 residues long: Light-harvesting complex-like protein 3 isotype 1, chloroplastic (262 aa).

Residues M1–R39 constitute a chloroplast transit peptide. 2 consecutive transmembrane segments (helical) span residues A180–V200 and Q202–I222.

As to quaternary structure, interacts with GGR. Forms homodimer, and heterodimer with LIL3.2. As to expression, expressed in photosynthetically active tissues (at protein level).

Its subcellular location is the plastid. The protein localises to the chloroplast thylakoid membrane. In terms of biological role, light-harvesting-like protein required for biosynthesis of phytylated chlorophylls and alpha-tocopherol in green seedlings. Functions by anchoring geranylgeranyl reductase (GGR) in the thylakoid membrane, leading to the stabilization of GGR activity. Binds chlorophyll a in the thylakoid membrane. Plays a role in the regulation of chlorophyll biosynthesis under light stress and under standard growth conditions. The sequence is that of Light-harvesting complex-like protein 3 isotype 1, chloroplastic (LIL3.1) from Arabidopsis thaliana (Mouse-ear cress).